Here is an 869-residue protein sequence, read N- to C-terminus: Probable beta-glucosidase F (869 aa).

The N-terminal stretch at 1–19 (MRVLSAIALVASLASSALS) is a signal peptide. Residues asparagine 77 and asparagine 261 are each glycosylated (N-linked (GlcNAc...) asparagine). Aspartate 289 is a catalytic residue. N-linked (GlcNAc...) asparagine glycosylation is found at asparagine 332, asparagine 364, asparagine 399, and asparagine 478. The tract at residues 677–697 (STYPPTRPPKGPTPTYPTAIP) is disordered. Positions 681 to 691 (PTRPPKGPTPT) are enriched in pro residues. Residue asparagine 728 is glycosylated (N-linked (GlcNAc...) asparagine).

The protein belongs to the glycosyl hydrolase 3 family.

It is found in the secreted. The catalysed reaction is Hydrolysis of terminal, non-reducing beta-D-glucosyl residues with release of beta-D-glucose.. It functions in the pathway glycan metabolism; cellulose degradation. In terms of biological role, beta-glucosidases are one of a number of cellulolytic enzymes involved in the degradation of cellulosic biomass. Catalyzes the last step releasing glucose from the inhibitory cellobiose. In Aspergillus fumigatus (strain ATCC MYA-4609 / CBS 101355 / FGSC A1100 / Af293) (Neosartorya fumigata), this protein is Probable beta-glucosidase F (bglF).